The sequence spans 593 residues: Mitoguardin 2 (593 aa).

Transmembrane regions (helical) follow at residues 11–31 and 42–62; these read MIQA…TTFG and PGLR…ALAA. Disordered stretches follow at residues 101–134 and 195–228; these read KKGY…HSGS and LSVG…EPES. Residues 107–123 show a composition bias toward polar residues; sequence RRVQSPSSKSNDTLSGI. Residues 124–134 are compositionally biased toward low complexity; that stretch reads SSIEPSKHSGS. Residue Ser132 is modified to Phosphoserine. Residue Thr206 is modified to Phosphothreonine. Ser220, Ser224, and Ser228 each carry phosphoserine. A Phosphothreonine modification is found at Thr273. 2 positions are modified to phosphoserine: Ser276 and Ser295. Residues 292 to 298 carry the FFAT motif; sequence SFFSATE. A helical transmembrane segment spans residues 563–583; that stretch reads ILLGYLGVPAASSIGLNGVLP.

This sequence belongs to the mitoguardin family. Homodimer and heterodimer; forms heterodimers with MIGA1. Interacts with PLD6/MitoPLD. Interacts (via phosphorylated FFAT motif) with MOSPD2. In terms of processing, phosphorylation at Ser-295 of the FFAT motif activates interaction with MOSPD2.

It is found in the mitochondrion outer membrane. Regulator of mitochondrial fusion: acts by forming homo- and heterodimers at the mitochondrial outer membrane and facilitating the formation of PLD6/MitoPLD dimers. May act by regulating phospholipid metabolism via PLD6/MitoPLD. This is Mitoguardin 2 from Bos taurus (Bovine).